A 1230-amino-acid chain; its full sequence is Cullin-associated NEDD8-dissociated protein 1 (1230 aa).

An N-acetylalanine modification is found at A2. HEAT repeat units follow at residues 2–39 (ASASYHISNLLEKMTSSDKDFRFMATNDLMTELQKDSI), 44–81 (DSERKVVKMILRLLEDKNGEVQNLAVKCLGPLVSKVKE), 83–119 (QVETIVDTLCTNMLSDKEQLRDISSIGLKTVIGELPP), 131–165 (CKKITGRLTSAIAKQEDVSVQLEALDIMADMLSRQ), 171–208 (NFHPSILTCLLPQLTSPRLAVRKRTIIALGHLVMSCGN), 210–247 (VFVDLIEHLLSELSKNDSMSTTRTYIQCIAAISRQAGH), 248–282 (RIGEYLEKIIPLVVKFCNVDDDELREYCIQAFESF), 289–366 (EVYP…TRHE), 370–407 (EFYKTVSPALIARFKEREENVKADVFHAYLSLLKQTRP), 424–467 (PLTM…VLPG), 471–510 (QHIPVLVPGIIFSLNDKSSSSNLKIDALSCLYVILCNHSP), and 515–552 (PHVQALVPPVVACVGDPFYKITSEALLVTQQLVKVIRP). A disordered region spans residues 315–344 (DEDEDENAMDADGGDDDDQGSDDEYSDDDD). Phosphoserine is present on S335. The residue at position 558 (S558) is a Phosphoserine. HEAT repeat units lie at residues 563 to 602 (PYIKDLFTCTIKRLKAADIDQEVKERAISCMGQIICNLGD), 606 to 643 (PDLSNTLQIFLERLKNEITRLTTVKALTLIAGSPLKID), 646 to 683 (PVLGEGVPILASFLRKNQRALKLGTLSALDILIKNYSD), 688 to 725 (AMIDAVLDELPPLISESDMHVSQMAISFLTTLAKVYPS), 729 to 768 (KISGSILNELIGLVRSPLLQGGALSAMLDFFQALVVTGTN), 770 to 808 (LGYMDLLRMLTGPVYSQSTALTHKQSYYSIAKCVAALTR), 809 to 845 (ACPKEGPAVVGQFIQDVKNSRSTDSIRLLALLSLGEV), 852 to 889 (SGQLELKSVILEAFSSPSEEVKSAASYALGSISVGNLP), 890 to 927 (EYLPFVLQEITSQPKRQYLLLHSLKEIISSASVAGLKP), 928 to 960 (YVENIWALLLKHCECAEEGTRNVVAECLGKLTL), 961 to 998 (IDPETLLPRLKGYLISGSSYARSSVVTAVKFTISDHPQ), 1002 to 1039 (PLLKNCIGDFLKTLEDPDLNVRRVALVTFNSAAHNKPS), 1043 to 1097 (DLLD…DSCL), 1099 to 1133 (RLDIFEFLNHVEDGLKDHYDIKMLTFLMLVRLSTL), and 1140 to 1189 (QRLD…IPEA). K971 carries the post-translational modification N6-acetyllysine.

This sequence belongs to the CAND family. As to quaternary structure, interacts with TBP. Part of a complex that contains CUL1 and RBX1. Interacts with unneddylated cullins: interacts with CUL1, CUL2, CUL3, CUL4A, CUL4B and CUL5. Does not bind neddylated CUL1. Interaction with cullins is abolished in presence of COMMD1, which antagonizes with CAND1 for interacting with cullins. Interacts with ERCC6. Interacts with DCUN1D1, DCUN1D2, DCUN1D3, DCUN1D4 and DCUN1D5; these interactions are bridged by cullins and strongly inhibits the neddylation of cullins.

It localises to the cytoplasm. Its subcellular location is the nucleus. Key assembly factor of SCF (SKP1-CUL1-F-box protein) E3 ubiquitin ligase complexes that promotes the exchange of the substrate-recognition F-box subunit in SCF complexes, thereby playing a key role in the cellular repertoire of SCF complexes. Acts as a F-box protein exchange factor. The exchange activity of CAND1 is coupled with cycles of neddylation conjugation: in the deneddylated state, cullin-binding CAND1 binds CUL1-RBX1, increasing dissociation of the SCF complex and promoting exchange of the F-box protein. Probably plays a similar role in other cullin-RING E3 ubiquitin ligase complexes. The protein is Cullin-associated NEDD8-dissociated protein 1 (Cand1) of Mus musculus (Mouse).